We begin with the raw amino-acid sequence, 116 residues long: Large ribosomal subunit protein uL18 (116 aa).

Belongs to the universal ribosomal protein uL18 family. Part of the 50S ribosomal subunit; part of the 5S rRNA/L5/L18/L25 subcomplex. Contacts the 5S and 23S rRNAs.

In terms of biological role, this is one of the proteins that bind and probably mediate the attachment of the 5S RNA into the large ribosomal subunit, where it forms part of the central protuberance. The protein is Large ribosomal subunit protein uL18 of Pseudomonas syringae pv. tomato (strain ATCC BAA-871 / DC3000).